Here is a 373-residue protein sequence, read N- to C-terminus: Geraniol dehydrogenase (373 aa).

The Zn(2+) site is built by Cys-47, His-67, Cys-96, Cys-99, Cys-102, Cys-110, and Cys-175.

This sequence belongs to the zinc-containing alcohol dehydrogenase family. In terms of assembly, homodimer. The cofactor is Zn(2+).

The catalysed reaction is (2E)-geraniol + NAD(+) = (2E)-geranial + NADH + H(+). It carries out the reaction perillyl alcohol + NAD(+) = perillyl aldehyde + NADH + H(+). The protein operates within terpene metabolism; monoterpene degradation. With respect to regulation, is inhibited by EDTA, N-ethylmaleimide, diethylpyrocarbonate, and 1-cyclohexyl-N-(2-morpholinoethyl)carbodiimide in vitro. Its function is as follows. Involved in the degradation of the monoterpenes beta-myrcene and limonene. During anaerobic degradation of beta-myrcene, catalyzes the NAD(+)-dependent oxidation of geraniol to geranial. Can also catalyze the oxidation of (S)-perillyl alcohol to perillyl aldehyde, and to a lesser extent, the oxidation of nerol, citronellol, cumic alcohol, and benzyl alcohol. Cannot use NADP(+) instead of NAD(+) as cosubstrate. The chain is Geraniol dehydrogenase from Castellaniella defragrans (strain DSM 12143 / CCUG 39792 / 65Phen) (Alcaligenes defragrans).